A 125-amino-acid polypeptide reads, in one-letter code: U-scoloptoxin(05)-Sm1a (125 aa).

Positions 1–20 (MNVLYTKIFFILILTRTSSA) are cleaved as a signal peptide.

It belongs to the scoloptoxin-05 family. Contains 4 disulfide bonds. Expressed by the venom gland.

The protein resides in the secreted. This Scolopendra morsitans (Tanzanian blue ringleg centipede) protein is U-scoloptoxin(05)-Sm1a.